We begin with the raw amino-acid sequence, 478 residues long: Chromosomal replication initiator protein DnaA (478 aa).

The domain I, interacts with DnaA modulators stretch occupies residues 1–95 (MNKTLNPQEV…DVLEKEITEE (95 aa)). A domain II region spans residues 96 to 141 (INDLVQSMEEEDFALIDHTKPVIPNFFDQNTRVNFGGGPNNHHPTT). The tract at residues 142–358 (GVNPRFTFDN…GALLRIFALA (217 aa)) is domain III, AAA+ region. 4 residues coordinate ATP: Gly186, Gly188, Lys189, and Thr190. Residues 359–478 (SFNKEEINMT…YKLTQFILRR (120 aa)) form a domain IV, binds dsDNA region.

The protein belongs to the DnaA family. Oligomerizes as a right-handed, spiral filament on DNA at oriC.

The protein localises to the cytoplasm. In terms of biological role, plays an essential role in the initiation and regulation of chromosomal replication. ATP-DnaA binds to the origin of replication (oriC) to initiate formation of the DNA replication initiation complex once per cell cycle. Binds the DnaA box (a 9 base pair repeat at the origin) and separates the double-stranded (ds)DNA. Forms a right-handed helical filament on oriC DNA; dsDNA binds to the exterior of the filament while single-stranded (ss)DNA is stabiized in the filament's interior. The ATP-DnaA-oriC complex binds and stabilizes one strand of the AT-rich DNA unwinding element (DUE), permitting loading of DNA polymerase. After initiation quickly degrades to an ADP-DnaA complex that is not apt for DNA replication. Binds acidic phospholipids. The chain is Chromosomal replication initiator protein DnaA from Tropheryma whipplei (strain TW08/27) (Whipple's bacillus).